Reading from the N-terminus, the 156-residue chain is Transcription elongation factor GreA (156 aa).

Residues 1–32 (MKKVRLTREGYEKLKKELEDLKRKFMYEISER) are a coiled coil.

The protein belongs to the GreA/GreB family.

Necessary for efficient RNA polymerase transcription elongation past template-encoded arresting sites. The arresting sites in DNA have the property of trapping a certain fraction of elongating RNA polymerases that pass through, resulting in locked ternary complexes. Cleavage of the nascent transcript by cleavage factors such as GreA or GreB allows the resumption of elongation from the new 3'terminus. GreA releases sequences of 2 to 3 nucleotides. The polypeptide is Transcription elongation factor GreA (Thermotoga sp. (strain RQ2)).